Here is a 123-residue protein sequence, read N- to C-terminus: Large ribosomal subunit protein bL12 (123 aa).

The protein belongs to the bacterial ribosomal protein bL12 family. As to quaternary structure, homodimer. Part of the ribosomal stalk of the 50S ribosomal subunit. Forms a multimeric L10(L12)X complex, where L10 forms an elongated spine to which 2 to 4 L12 dimers bind in a sequential fashion. Binds GTP-bound translation factors.

Its function is as follows. Forms part of the ribosomal stalk which helps the ribosome interact with GTP-bound translation factors. Is thus essential for accurate translation. The polypeptide is Large ribosomal subunit protein bL12 (Bacillus licheniformis (strain ATCC 14580 / DSM 13 / JCM 2505 / CCUG 7422 / NBRC 12200 / NCIMB 9375 / NCTC 10341 / NRRL NRS-1264 / Gibson 46)).